The sequence spans 445 residues: Histidinol dehydrogenase (445 aa).

Residues tyrosine 136, glutamine 200, and asparagine 228 each coordinate NAD(+). Positions 251, 273, and 276 each coordinate substrate. Zn(2+) contacts are provided by glutamine 273 and histidine 276. Active-site proton acceptor residues include glutamate 342 and histidine 343. Positions 343, 376, 430, and 435 each coordinate substrate. A Zn(2+)-binding site is contributed by aspartate 376. Histidine 435 contributes to the Zn(2+) binding site.

Belongs to the histidinol dehydrogenase family. Zn(2+) is required as a cofactor.

It carries out the reaction L-histidinol + 2 NAD(+) + H2O = L-histidine + 2 NADH + 3 H(+). Its pathway is amino-acid biosynthesis; L-histidine biosynthesis; L-histidine from 5-phospho-alpha-D-ribose 1-diphosphate: step 9/9. Its function is as follows. Catalyzes the sequential NAD-dependent oxidations of L-histidinol to L-histidinaldehyde and then to L-histidine. The chain is Histidinol dehydrogenase (hisD) from Mycolicibacterium smegmatis (Mycobacterium smegmatis).